The sequence spans 356 residues: tRNA N6-adenosine threonylcarbamoyltransferase (356 aa).

Fe cation contacts are provided by His-115 and His-119. Substrate contacts are provided by residues 138–142 (LVSGG), Asp-171, Gly-184, and Asn-283. Asp-311 is a Fe cation binding site.

It belongs to the KAE1 / TsaD family. It depends on Fe(2+) as a cofactor.

It localises to the cytoplasm. The catalysed reaction is L-threonylcarbamoyladenylate + adenosine(37) in tRNA = N(6)-L-threonylcarbamoyladenosine(37) in tRNA + AMP + H(+). Required for the formation of a threonylcarbamoyl group on adenosine at position 37 (t(6)A37) in tRNAs that read codons beginning with adenine. Is involved in the transfer of the threonylcarbamoyl moiety of threonylcarbamoyl-AMP (TC-AMP) to the N6 group of A37, together with TsaE and TsaB. TsaD likely plays a direct catalytic role in this reaction. The sequence is that of tRNA N6-adenosine threonylcarbamoyltransferase from Prochlorococcus marinus (strain MIT 9215).